A 177-amino-acid polypeptide reads, in one-letter code: ATP-dependent protease subunit HslV (177 aa).

Thr-5 is an active-site residue. Na(+) is bound by residues Gly-161, Cys-164, and Thr-167.

The protein belongs to the peptidase T1B family. HslV subfamily. A double ring-shaped homohexamer of HslV is capped on each side by a ring-shaped HslU homohexamer. The assembly of the HslU/HslV complex is dependent on binding of ATP.

It localises to the cytoplasm. It catalyses the reaction ATP-dependent cleavage of peptide bonds with broad specificity.. With respect to regulation, allosterically activated by HslU binding. Its function is as follows. Protease subunit of a proteasome-like degradation complex believed to be a general protein degrading machinery. This is ATP-dependent protease subunit HslV from Campylobacter concisus (strain 13826).